The primary structure comprises 86 residues: Large ribosomal subunit protein bL31B (86 aa).

It belongs to the bacterial ribosomal protein bL31 family. Type B subfamily. In terms of assembly, part of the 50S ribosomal subunit.

The sequence is that of Large ribosomal subunit protein bL31B from Erwinia tasmaniensis (strain DSM 17950 / CFBP 7177 / CIP 109463 / NCPPB 4357 / Et1/99).